We begin with the raw amino-acid sequence, 274 residues long: MATLRESIIEELGTKPTIDAAAEVRARVQFLKDYVRSTPAKGFVLGISGGQDSTLAGALAQRAVTELREEGHEAEFVAVRLPYGAQADESDAQIALGFIKPDRSITVNVKPGADATAREASEALGNGELRDFVRGNIKARERMVIQYAIAGQLGYLVIGTDHAAEAITGFFTKFGDGGVDITPLTGLSKRQGAALLQELGAPESTWRKVPTADLEDDRPALPDEVALGVTYSQIDDYLEGKDVSSEVAEKLEKMFANTRHKRTVPVTPLDDWWK.

An ATP-binding site is contributed by glycine 46–serine 53. Mg(2+) is bound at residue aspartate 52. Arginine 140 provides a ligand contact to deamido-NAD(+). Threonine 160 contributes to the ATP binding site. Mg(2+) is bound at residue glutamate 165. Residues lysine 173 and aspartate 180 each coordinate deamido-NAD(+). Residues lysine 189 and threonine 211 each coordinate ATP. Histidine 260–lysine 261 is a binding site for deamido-NAD(+).

It belongs to the NAD synthetase family. As to quaternary structure, homodimer.

The enzyme catalyses deamido-NAD(+) + NH4(+) + ATP = AMP + diphosphate + NAD(+) + H(+). Its pathway is cofactor biosynthesis; NAD(+) biosynthesis; NAD(+) from deamido-NAD(+) (ammonia route): step 1/1. Its function is as follows. Catalyzes the ATP-dependent amidation of deamido-NAD to form NAD. Uses ammonia as a nitrogen source. In Rhodococcus erythropolis (strain PR4 / NBRC 100887), this protein is NH(3)-dependent NAD(+) synthetase.